Here is a 296-residue protein sequence, read N- to C-terminus: Acetylglutamate kinase (296 aa).

Substrate-binding positions include 68 to 69 (GG), Arg-90, and Asn-195.

Belongs to the acetylglutamate kinase family. ArgB subfamily.

Its subcellular location is the cytoplasm. The catalysed reaction is N-acetyl-L-glutamate + ATP = N-acetyl-L-glutamyl 5-phosphate + ADP. The protein operates within amino-acid biosynthesis; L-arginine biosynthesis; N(2)-acetyl-L-ornithine from L-glutamate: step 2/4. In terms of biological role, catalyzes the ATP-dependent phosphorylation of N-acetyl-L-glutamate. The chain is Acetylglutamate kinase from Desulfotalea psychrophila (strain LSv54 / DSM 12343).